The following is a 305-amino-acid chain: Transcription factor bHLH18 (305 aa).

The segment at 41–67 (LKTTHISPNLHPFSSSNPPPPKHQPSS) is disordered. Residues 44 to 56 (THISPNLHPFSSS) show a composition bias toward polar residues. The region spanning 122-171 (SNAQDHILAERKRREKLTQRFVALSALIPGLKKMDKASVLGDAIKHIKYL) is the bHLH domain. The interval 201–224 (DENHQPSSSSSSDGNRNSSSSNLP) is disordered. Low complexity predominate over residues 207 to 222 (SSSSSSDGNRNSSSSN).

Homodimer. As to expression, expressed in roots.

The protein localises to the nucleus. This is Transcription factor bHLH18 (BHLH18) from Arabidopsis thaliana (Mouse-ear cress).